Reading from the N-terminus, the 467-residue chain is Asparagine--tRNA ligase (467 aa).

The protein belongs to the class-II aminoacyl-tRNA synthetase family. As to quaternary structure, homodimer.

The protein resides in the cytoplasm. The enzyme catalyses tRNA(Asn) + L-asparagine + ATP = L-asparaginyl-tRNA(Asn) + AMP + diphosphate + H(+). The sequence is that of Asparagine--tRNA ligase from Histophilus somni (strain 2336) (Haemophilus somnus).